A 441-amino-acid chain; its full sequence is Ribulose bisphosphate carboxylase large chain (441 aa).

Lys4 carries the N6,N6,N6-trimethyllysine modification. Substrate contacts are provided by Asn113 and Thr163. Catalysis depends on Lys165, which acts as the Proton acceptor. Lys167 is a binding site for substrate. Residues Lys191, Asp193, and Glu194 each coordinate Mg(2+). Lys191 is modified (N6-carboxylysine). The active-site Proton acceptor is His284. Positions 285, 317, and 369 each coordinate substrate.

This sequence belongs to the RuBisCO large chain family. Type I subfamily. Heterohexadecamer of 8 large chains and 8 small chains; disulfide-linked. The disulfide link is formed within the large subunit homodimers. The cofactor is Mg(2+). The disulfide bond which can form in the large chain dimeric partners within the hexadecamer appears to be associated with oxidative stress and protein turnover.

The protein resides in the plastid. The protein localises to the chloroplast. It catalyses the reaction 2 (2R)-3-phosphoglycerate + 2 H(+) = D-ribulose 1,5-bisphosphate + CO2 + H2O. The catalysed reaction is D-ribulose 1,5-bisphosphate + O2 = 2-phosphoglycolate + (2R)-3-phosphoglycerate + 2 H(+). Its function is as follows. RuBisCO catalyzes two reactions: the carboxylation of D-ribulose 1,5-bisphosphate, the primary event in carbon dioxide fixation, as well as the oxidative fragmentation of the pentose substrate in the photorespiration process. Both reactions occur simultaneously and in competition at the same active site. This chain is Ribulose bisphosphate carboxylase large chain, found in Heliamphora nutans (Venezuelan marsh pitcher plant).